We begin with the raw amino-acid sequence, 276 residues long: Membrane protein insertase YidC 2 (276 aa).

An N-terminal signal peptide occupies residues 1-22; it reads MGVKKKLKLTSLLGLSLLIMTA. C23 carries N-palmitoyl cysteine lipidation. C23 carries S-diacylglycerol cysteine lipidation. 4 helical membrane passes run 58 to 78, 130 to 150, 169 to 189, and 207 to 227; these read ISIG…LLPV, SDSL…FQAL, VDTT…STWL, and GIPV…ALYW.

Belongs to the OXA1/ALB3/YidC family. Type 2 subfamily. In terms of assembly, interacts with KhpB (also called EloR/Jag).

The protein localises to the cell membrane. Functionally, required for the insertion and/or proper folding and/or complex formation of integral membrane proteins into the membrane. Involved in integration of membrane proteins that insert both dependently and independently of the Sec translocase complex, as well as at least some lipoproteins. This chain is Membrane protein insertase YidC 2, found in Streptococcus pneumoniae (strain ATCC BAA-255 / R6).